The sequence spans 43 residues: Protein PsbN (43 aa).

Residues Ala-4–Tyr-24 traverse the membrane as a helical segment.

Belongs to the PsbN family.

Its subcellular location is the plastid. It is found in the chloroplast thylakoid membrane. In terms of biological role, may play a role in photosystem I and II biogenesis. This Trieres chinensis (Marine centric diatom) protein is Protein PsbN.